Here is a 748-residue protein sequence, read N- to C-terminus: Chondroadherin-like protein (748 aa).

The N-terminal stretch at 1-29 (MERPQSSIWVFMLLLFMVLLQSPAWHVAA) is a signal peptide. One can recognise an LRRNT 1 domain in the interval 30-61 (QRCPQTCVCDNSRRHVTCRHQNLTEVPNTIPE). An N-linked (GlcNAc...) asparagine glycan is attached at Asn-51. 9 LRR repeats span residues 85-107 (PHLT…AFRG), 108-131 (LGRL…ALDG), 132-155 (LGSL…TFGA), 156-179 (LGSL…AFQG), 181-203 (LRTR…ALAG), 204-227 (LPAL…ALSQ), 229-252 (RSLA…GLAL), 253-275 (PGLR…AFAH), and 276-299 (CPRL…QVPG). Residues 309 to 357 (NPLWCACHARPLLEWLVRARVRSDGACRGPRRLRGEALDTLRPSDLRCP) enclose the LRRCT 1 domain. The tract at residues 352 to 389 (SDLRCPGDAAAGDGDGDEDEDRPAGPRAPPLRSPHGEA) is disordered. The 35-residue stretch at 394–428 (PCPPACACVAETRHSTCDGRGLQAVPRGFPNDTQL) folds into the LRRNT 2 domain. Cys-395 and Cys-410 form a disulfide bridge. 10 LRR repeats span residues 423–446 (PNDT…AFPG), 448–470 (RHLV…ALAG), 471–494 (LDRL…ALEG), 496–518 (PNLG…ALRA), 519–542 (LPTL…DLAG), 544–566 (RALR…ALGP), 567–590 (AREL…ALEG), 591–614 (LPAL…AFQP), 616–639 (GRSL…AFSG), and 641–665 (GKGL…GLSG). N-linked (GlcNAc...) asparagine glycosylation occurs at Asn-625. An LRRCT 2 domain is found at 674-722 (NPFHCDCQLLPLHRWLTGLNLRVGATCATPPSVRGQKVKVAAPVFEACP). Disulfide bonds link Cys-678-Cys-721 and Cys-680-Cys-700. The segment at 728–748 (KAKRTPTSRGSARRTPSLSRH) is disordered. A compositionally biased stretch (polar residues) spans 734 to 748 (TSRGSARRTPSLSRH).

The protein belongs to the small leucine-rich proteoglycan (SLRP) family. SLRP class IV subfamily. As to quaternary structure, associates with collagen and binds to collagen fibrils. Expressed in cartilage, including articular knee cartilage, where it localizes to the extracellular space in the area immediately surrounding the chondrocytes, not detected in any other tissues (at protein level).

It is found in the secreted. It localises to the extracellular space. The protein resides in the extracellular matrix. Potential negative modulator of chondrocyte differentiation. Inhibits collagen fibrillogenesis in vitro. May influence chondrocyte's differentiation by acting on its cellular collagenous microenvironment. The polypeptide is Chondroadherin-like protein (Chadl) (Mus musculus (Mouse)).